Reading from the N-terminus, the 432-residue chain is MADIIVKNAYVMTMDPDEGDLKNGTVVIEDGKITEIGEKTSESADTVIDAKHSVVMPGLVNTHTHAAMTLFRGYADDLQLADWLEGHIWPAEAKLTAEDVYKGSLLACLEMIRSGTTSFADMYFYMDETAKAVEASGLRASLCHGLIELWNEEKGATDLKEGKRFVRAWQGAADGRIKTMYGPHAPNTCSEEFLAKVREEANRDGAGIHIHLLETEAELLAMKERYGKCSVHLLEDIGFLGPDVLAAHCVWLSDGDIEILGKRGVNVSHNVISNMKLASGIAPVYKMLEKGVNVSLGTDGCASNNNLDLFEEMKTAALLHKVNTFSPTALPARQVLQMGTVNGAKALGTETGMLKVGMKADLIVVDMKKAHLTPCFDVPSHLVYSAKGSDVRTTIVNGKVLMDDYKVLALDEQKVMEDAQKAAEELVTRVNA.

The Zn(2+) site is built by histidine 63 and histidine 65. Substrate-binding residues include glutamate 92 and histidine 184. Position 211 (histidine 211) interacts with Zn(2+). Substrate-binding residues include glutamate 214 and aspartate 299. Aspartate 299 contacts Zn(2+).

The protein belongs to the metallo-dependent hydrolases superfamily. MTA/SAH deaminase family. In terms of assembly, homotetramer. The cofactor is Zn(2+).

The enzyme catalyses 5'-deoxyadenosine + H2O + H(+) = 5'-deoxyinosine + NH4(+). The catalysed reaction is S-adenosyl-L-homocysteine + H2O + H(+) = S-inosyl-L-homocysteine + NH4(+). It carries out the reaction S-methyl-5'-thioadenosine + H2O + H(+) = S-methyl-5'-thioinosine + NH4(+). It catalyses the reaction adenosine + H2O + H(+) = inosine + NH4(+). It functions in the pathway amino-acid biosynthesis; S-adenosyl-L-methionine biosynthesis. Catalyzes the deamination of three SAM-derived enzymatic products, namely 5'-deoxyadenosine, S-adenosyl-L-homocysteine, and 5'-methylthioadenosine, to produce the inosine analogs. Can also deaminate adenosine. The preferred substrate for this enzyme is 5'-deoxyadenosine, but all these substrates are efficiently deaminated. Likely functions in a S-adenosyl-L-methionine (SAM) recycling pathway from S-adenosyl-L-homocysteine (SAH) produced from SAM-dependent methylation reactions. May also be involved in the recycling of 5'-deoxyadenosine, whereupon the 5'-deoxyribose moiety of 5'-deoxyinosine is further metabolized to deoxyhexoses used for the biosynthesis of aromatic amino acids in methanogens. This chain is 5'-deoxyadenosine deaminase, found in Methanosarcina barkeri (strain Fusaro / DSM 804).